Consider the following 1342-residue polypeptide: DNA-directed RNA polymerase subunit beta (1342 aa).

Belongs to the RNA polymerase beta chain family. In terms of assembly, the RNAP catalytic core consists of 2 alpha, 1 beta, 1 beta' and 1 omega subunit. When a sigma factor is associated with the core the holoenzyme is formed, which can initiate transcription.

The enzyme catalyses RNA(n) + a ribonucleoside 5'-triphosphate = RNA(n+1) + diphosphate. In terms of biological role, DNA-dependent RNA polymerase catalyzes the transcription of DNA into RNA using the four ribonucleoside triphosphates as substrates. The chain is DNA-directed RNA polymerase subunit beta from Sodalis glossinidius (strain morsitans).